Consider the following 441-residue polypeptide: Cysteine desulfurase, mitosomal (441 aa).

Pyridoxal 5'-phosphate is bound by residues 107–108 (AT), N189, Q217, and 237–239 (SGH). K240 is modified (N6-(pyridoxal phosphate)lysine). Position 277 (T277) interacts with pyridoxal 5'-phosphate. C367 acts as the Cysteine persulfide intermediate in catalysis. A [2Fe-2S] cluster-binding site is contributed by C367.

It belongs to the class-V pyridoxal-phosphate-dependent aminotransferase family. NifS/IscS subfamily. As to quaternary structure, interacts with ISD11. Pyridoxal 5'-phosphate serves as cofactor.

The protein resides in the mitosome. It carries out the reaction (sulfur carrier)-H + L-cysteine = (sulfur carrier)-SH + L-alanine. Catalyzes the removal of elemental sulfur from cysteine to produce alanine. It supplies the inorganic sulfur for iron-sulfur (Fe-S) clusters in mitosomes. This is Cysteine desulfurase, mitosomal from Trachipleistophora hominis (Microsporidian parasite).